The following is a 351-amino-acid chain: Histidine-rich glycoprotein (351 aa).

A signal peptide spans 1–23 (MFTSLKKVATFSFLVWISQYSGS). The propeptide occupies 24–47 (NSCSSSLVKHIPQTGSNLTFDRVL). Asparagine 40 is a glycosylation site (N-linked (GlcNAc...) asparagine). A compositionally biased stretch (basic and acidic residues) spans 57–91 (LHEEHHHHHPEEHHEPHHEEHHHHHPEEHHEPHHE). The tract at residues 57 to 351 (LHEEHHHHHP…DAHHHHHHHH (295 aa)) is disordered. Repeat copies occupy residues 59–74 (EEHH…EPHH), 75–90 (EEHH…EPHH), 91–107 (EEHH…HHHH), 108–123 (PPHH…HHHH), 124–138 (AAHH…HHHH), and 139–153 (AAHH…HHHH). Residues 59–90 (EEHHHHHPEEHHEPHHEEHHHHHPEEHHEPHH) are 2 X 16 AA tandem repeats. The interval 91 to 123 (EEHHHHHPHPHHHHHHHPPHHHHHLGHHHHHHH) is 2 X 17 AA tandem repeats. The span at 92–351 (EHHHHHPHPH…DAHHHHHHHH (260 aa)) shows a compositional bias: basic residues. The interval 124 to 153 (AAHHHHHEEHHHHHHAAHHHHHEEHHHHHH) is 2 X 15 AA tandem repeats. The tract at residues 173 to 351 (APHHHHHHHH…DAHHHHHHHH (179 aa)) is 18 X 10 AA tandem repeats.

The sequence is that of Histidine-rich glycoprotein from Plasmodium lophurae.